Here is an 83-residue protein sequence, read N- to C-terminus: Probable calcium-binding protein CML28 (83 aa).

2 EF-hand domains span residues 5–40 (TEKA…LGSV) and 43–75 (EDIK…NRGL). Residues Asp18, Asn20, Asp22, Lys24, Glu29, Asp53, Asp55, Asp57, Tyr59, and Glu64 each coordinate Ca(2+).

Its function is as follows. Potential calcium sensor. This is Probable calcium-binding protein CML28 (CML28) from Arabidopsis thaliana (Mouse-ear cress).